The following is a 148-amino-acid chain: Large ribosomal subunit protein bL9 (148 aa).

It belongs to the bacterial ribosomal protein bL9 family.

Functionally, binds to the 23S rRNA. This Staphylococcus haemolyticus (strain JCSC1435) protein is Large ribosomal subunit protein bL9.